Consider the following 272-residue polypeptide: NAD kinase (272 aa).

Aspartate 50 acts as the Proton acceptor in catalysis. NAD(+) contacts are provided by residues 50–51, 126–127, arginine 152, aspartate 154, 165–170, and alanine 189; these read DG, NE, and TAYNKS.

The protein belongs to the NAD kinase family. Requires a divalent metal cation as cofactor.

The protein localises to the cytoplasm. The enzyme catalyses NAD(+) + ATP = ADP + NADP(+) + H(+). Its function is as follows. Involved in the regulation of the intracellular balance of NAD and NADP, and is a key enzyme in the biosynthesis of NADP. Catalyzes specifically the phosphorylation on 2'-hydroxyl of the adenosine moiety of NAD to yield NADP. The sequence is that of NAD kinase from Streptococcus pneumoniae (strain 70585).